A 199-amino-acid chain; its full sequence is Superoxide dismutase [Mn/Fe] (199 aa).

Fe(3+) is bound by residues His27, His81, Asp161, and His165. Mn(2+) is bound by residues His27, His81, Asp161, and His165.

The protein belongs to the iron/manganese superoxide dismutase family. As to quaternary structure, homodimer. Mn(2+) is required as a cofactor. It depends on Fe(3+) as a cofactor.

It carries out the reaction 2 superoxide + 2 H(+) = H2O2 + O2. In terms of biological role, destroys superoxide anion radicals which are normally produced within the cells and which are toxic to biological systems. Catalyzes the dismutation of superoxide anion radicals into O2 and H2O2 by successive reduction and oxidation of the transition metal ion at the active site. The sequence is that of Superoxide dismutase [Mn/Fe] (sodA) from Staphylococcus epidermidis (strain ATCC 35984 / DSM 28319 / BCRC 17069 / CCUG 31568 / BM 3577 / RP62A).